The following is a 130-amino-acid chain: Small ribosomal subunit protein uS9 (130 aa).

The protein belongs to the universal ribosomal protein uS9 family.

This is Small ribosomal subunit protein uS9 from Shewanella loihica (strain ATCC BAA-1088 / PV-4).